The chain runs to 296 residues: ADP-forming sulfoacetate-CoA ligase subunit SqwL (296 aa).

CoA-binding positions include 17–20 (TGSE), Lys-43, and 96–98 (IAD). The Tele-phosphohistidine intermediate role is filled by His-251.

This sequence belongs to the succinate/malate CoA ligase alpha subunit family. In terms of assembly, forms a complex with SqwK.

It catalyses the reaction sulfoacetate + ATP + CoA = sulfoacetyl-CoA + ADP + phosphate. Functionally, part of a variant of the sulfo-TK pathway, a D-sulfoquinovose degradation pathway that produces sulfoacetate. Hydrolyzes sulfoacetyl-coenzyme A (sulfoacetyl-CoA) to produce sulfoacetate and CoA coupled with the phosphorylation of ADP to generate ATP. Cannot use succinate, acetate or 3-hydroxypropionate, and shows only residual activities with malonate and 3-sulfopropanoate. This chain is ADP-forming sulfoacetate-CoA ligase subunit SqwL, found in Acholeplasma sp.